A 479-amino-acid polypeptide reads, in one-letter code: Aspartyl/glutamyl-tRNA(Asn/Gln) amidotransferase subunit B (479 aa).

This sequence belongs to the GatB/GatE family. GatB subfamily. In terms of assembly, heterotrimer of A, B and C subunits.

It carries out the reaction L-glutamyl-tRNA(Gln) + L-glutamine + ATP + H2O = L-glutaminyl-tRNA(Gln) + L-glutamate + ADP + phosphate + H(+). The enzyme catalyses L-aspartyl-tRNA(Asn) + L-glutamine + ATP + H2O = L-asparaginyl-tRNA(Asn) + L-glutamate + ADP + phosphate + 2 H(+). Its function is as follows. Allows the formation of correctly charged Asn-tRNA(Asn) or Gln-tRNA(Gln) through the transamidation of misacylated Asp-tRNA(Asn) or Glu-tRNA(Gln) in organisms which lack either or both of asparaginyl-tRNA or glutaminyl-tRNA synthetases. The reaction takes place in the presence of glutamine and ATP through an activated phospho-Asp-tRNA(Asn) or phospho-Glu-tRNA(Gln). The polypeptide is Aspartyl/glutamyl-tRNA(Asn/Gln) amidotransferase subunit B (Mycoplasma capricolum subsp. capricolum (strain California kid / ATCC 27343 / NCTC 10154)).